Reading from the N-terminus, the 65-residue chain is uncharacterized protein (65 aa).

The segment at 1–30 (MPAASLESLLPPPPGKLPSPPLRPHGKFQR) is disordered. Over residues 10-23 (LPPPPGKLPSPPLR) the composition is skewed to pro residues.

This is an uncharacterized protein from Homo sapiens (Human).